The chain runs to 193 residues: Ion-translocating oxidoreductase complex subunit A (193 aa).

The next 6 helical transmembrane spans lie at 4-24, 39-59, 71-91, 102-122, 134-154, and 167-187; these read FFFI…KFLG, IGMG…SWMV, FLRI…IEVV, ALGI…VALL, LLYG…FAGM, and FAGA…FMGF.

It belongs to the NqrDE/RnfAE family. As to quaternary structure, the complex is composed of six subunits: RnfA, RnfB, RnfC, RnfD, RnfE and RnfG.

It is found in the cellular chromatophore membrane. Functionally, part of a membrane-bound complex that couples electron transfer with translocation of ions across the membrane. This Cereibacter sphaeroides (strain ATCC 17029 / ATH 2.4.9) (Rhodobacter sphaeroides) protein is Ion-translocating oxidoreductase complex subunit A.